The following is a 711-amino-acid chain: Zinc finger protein 175 (711 aa).

A compositionally biased stretch (polar residues) spans 1–11 (MPADVNLSQKP). The interval 1–21 (MPADVNLSQKPQVLGPEKQDG) is disordered. The 72-residue stretch at 27-98 (VSFEDVTVDF…EAEVSHQRCQ (72 aa)) folds into the KRAB domain. Residues 279–301 (DGCSECGGSFTQKSHLFAQQRIH) form a C2H2-type 1; atypical zinc finger. A C2H2-type 2; atypical zinc finger spans residues 307 to 329 (HECGKCGKAFMPQLKLSVYLTDH). The C2H2-type 3 zinc finger occupies 335–357 (CICKECGKVFIQRSELLTHQKTH). The Nuclear localization signal signature appears at 359 to 362 (RKKP). 12 consecutive C2H2-type zinc fingers follow at residues 363-385 (YKCHDCGKAFFQMLSLFRHQRTH), 391-413 (YECSECGKGFSQNSTLIIHQKIH), 419-441 (YACSECGKAFTQKSTLSLHQRIH), 447-469 (YVCIECGQAFIQKAHLIVHQRSH), 475-497 (YQCHNCGKSFISKSQLDIHHRIH), 503-525 (YECSDCGKTFTQKSHLNIHQKIH), 531-553 (HVCSECGKAFNQKSILSMHQRIH), 559-581 (YKCSECGKAFTSKSQFKEHQRIH), 587-609 (YVCTECGKAFNGRSNFHKHQITH), 615-637 (FVCYKCGKAFVQKSELITHQRTH), 643-665 (YECLDCGKSFSKKPQLKVHQRIH), and 671-693 (YVCSECGKAFNNRSNFNKHQTTH).

Belongs to the krueppel C2H2-type zinc-finger protein family. As to expression, ubiquitous.

The protein resides in the cytoplasm. Its subcellular location is the nucleus. Functionally, down-regulates the expression of several chemokine receptors. Interferes with HIV-1 replication by suppressing Tat-induced viral LTR promoter activity. The polypeptide is Zinc finger protein 175 (ZNF175) (Homo sapiens (Human)).